Here is a 142-residue protein sequence, read N- to C-terminus: Hemoglobin subunit alpha-2 (142 aa).

The region spanning 2-142 (LLTADDKKHI…VSSVLTSKYR (141 aa)) is the Globin domain. His-59 is an O2 binding site. Residue His-88 participates in heme b binding.

The protein belongs to the globin family. In terms of assembly, heterotetramer of two alpha chains and two beta chains. In terms of tissue distribution, red blood cells.

In terms of biological role, involved in oxygen transport from the lung to the various peripheral tissues. This chain is Hemoglobin subunit alpha-2 (hba2), found in Xenopus borealis (Kenyan clawed frog).